Here is a 273-residue protein sequence, read N- to C-terminus: Putative B3 domain-containing protein At5g58280 (273 aa).

Positions 127-218 (FVKSMVRSHV…KFKIYVFKGN (92 aa)) form a DNA-binding region, TF-B3. The segment at 225 to 273 (SARKRGRATTPSEEEEEEEDKDVEESGDEEHSSRATKRSSVRLLRKRKA) is disordered. Residues 236–252 (SEEEEEEEDKDVEESGD) show a composition bias toward acidic residues. The segment covering 258 to 273 (RATKRSSVRLLRKRKA) has biased composition (basic residues).

It is found in the nucleus. The chain is Putative B3 domain-containing protein At5g58280 from Arabidopsis thaliana (Mouse-ear cress).